The primary structure comprises 450 residues: Isoleucine 2-epimerase (450 aa).

Residues 115–116 (GS), Y142, and 250–253 (DEVN) each bind pyridoxal 5'-phosphate. K280 is subject to N6-(pyridoxal phosphate)lysine. T309 is a pyridoxal 5'-phosphate binding site.

This sequence belongs to the class-III pyridoxal-phosphate-dependent aminotransferase family. As to quaternary structure, homotetramer. Pyridoxal 5'-phosphate is required as a cofactor.

The enzyme catalyses L-isoleucine = D-allo-isoleucine. Catalyzes the epimerization of L-isoleucine to D-allo-isoleucine and D-allo-isoleucine to L-isoleucine. Can also catalyze the racemization of many nonpolar amino acids, including leucine and valine. Does not have GABA aminotransferase activity. The polypeptide is Isoleucine 2-epimerase (Lentilactobacillus buchneri (Lactobacillus buchneri)).